Consider the following 159-residue polypeptide: 3-hydroxyacyl-[acyl-carrier-protein] dehydratase FabZ (159 aa).

His58 is a catalytic residue.

This sequence belongs to the thioester dehydratase family. FabZ subfamily.

The protein resides in the cytoplasm. The catalysed reaction is a (3R)-hydroxyacyl-[ACP] = a (2E)-enoyl-[ACP] + H2O. Functionally, involved in unsaturated fatty acids biosynthesis. Catalyzes the dehydration of short chain beta-hydroxyacyl-ACPs and long chain saturated and unsaturated beta-hydroxyacyl-ACPs. The chain is 3-hydroxyacyl-[acyl-carrier-protein] dehydratase FabZ from Helicobacter pylori (strain G27).